Here is a 197-residue protein sequence, read N- to C-terminus: Probable chorismate pyruvate-lyase (197 aa).

Substrate-binding residues include arginine 66, leucine 104, and glutamate 169.

This sequence belongs to the UbiC family.

It localises to the cytoplasm. It catalyses the reaction chorismate = 4-hydroxybenzoate + pyruvate. The protein operates within cofactor biosynthesis; ubiquinone biosynthesis. Its function is as follows. Removes the pyruvyl group from chorismate, with concomitant aromatization of the ring, to provide 4-hydroxybenzoate (4HB) for the ubiquinone pathway. The chain is Probable chorismate pyruvate-lyase from Albidiferax ferrireducens (strain ATCC BAA-621 / DSM 15236 / T118) (Rhodoferax ferrireducens).